We begin with the raw amino-acid sequence, 303 residues long: N-acetylmuramic acid 6-phosphate etherase (303 aa).

The SIS domain maps to 60–223 (ATASLQAGGR…STGVMVKLGK (164 aa)). Glu-88 acts as the Proton donor in catalysis. Glu-119 is an active-site residue.

Belongs to the GCKR-like family. MurNAc-6-P etherase subfamily. As to quaternary structure, homodimer.

It catalyses the reaction N-acetyl-D-muramate 6-phosphate + H2O = N-acetyl-D-glucosamine 6-phosphate + (R)-lactate. The protein operates within amino-sugar metabolism; 1,6-anhydro-N-acetylmuramate degradation. It participates in amino-sugar metabolism; N-acetylmuramate degradation. Its pathway is cell wall biogenesis; peptidoglycan recycling. Functionally, specifically catalyzes the cleavage of the D-lactyl ether substituent of MurNAc 6-phosphate, producing GlcNAc 6-phosphate and D-lactate. Together with AnmK, is also required for the utilization of anhydro-N-acetylmuramic acid (anhMurNAc) either imported from the medium or derived from its own cell wall murein, and thus plays a role in cell wall recycling. This chain is N-acetylmuramic acid 6-phosphate etherase, found in Pectobacterium atrosepticum (strain SCRI 1043 / ATCC BAA-672) (Erwinia carotovora subsp. atroseptica).